The chain runs to 126 residues: Profilin-1 (126 aa).

The protein belongs to the profilin family. In terms of assembly, occurs in many kinds of cells as a complex with monomeric actin in a 1:1 ratio.

It localises to the cytoplasm. The protein resides in the cytoskeleton. In terms of biological role, binds to actin and affects the structure of the cytoskeleton. At high concentrations, profilin prevents the polymerization of actin, whereas it enhances it at low concentrations. By binding to PIP2, it inhibits the formation of IP3 and DG. The sequence is that of Profilin-1 (proA) from Dictyostelium discoideum (Social amoeba).